Consider the following 161-residue polypeptide: Urease accessory protein UreE (161 aa).

This sequence belongs to the UreE family.

It localises to the cytoplasm. Its function is as follows. Involved in urease metallocenter assembly. Binds nickel. Probably functions as a nickel donor during metallocenter assembly. This is Urease accessory protein UreE from Pseudarthrobacter chlorophenolicus (strain ATCC 700700 / DSM 12829 / CIP 107037 / JCM 12360 / KCTC 9906 / NCIMB 13794 / A6) (Arthrobacter chlorophenolicus).